The following is a 622-amino-acid chain: Prolactin receptor (622 aa).

The first 24 residues, 1–24 (MKENVASATVFTLLLFLNTCLLNG), serve as a signal peptide directing secretion. Residues 25–234 (QLPPGKPEIF…QIPSDFTMND (210 aa)) lie on the Extracellular side of the membrane. Fibronectin type-III domains lie at 27-128 (PPGK…VQPD) and 129-229 (PPLE…IPSD). An intrachain disulfide couples Cys-36 to Cys-46. Residue Asn-59 is glycosylated (N-linked (GlcNAc...) asparagine). Cys-75 and Cys-86 are oxidised to a cystine. The N-linked (GlcNAc...) asparagine glycan is linked to Asn-104. Asp-211 and His-212 together coordinate Zn(2+). Positions 215–219 (WSAWS) match the WSXWS motif motif. A glycan (N-linked (GlcNAc...) asparagine) is linked at Asn-233. A helical membrane pass occupies residues 235–258 (TTVWISVAVLSAVICLIIVWAVAL). The Cytoplasmic portion of the chain corresponds to 259-622 (KGYSMVTCIF…DPACFTHSFH (364 aa)). Residues 267-275 (IFPPVPGPK) carry the Box 1 motif motif. 3 disordered regions span residues 326-378 (MSVH…YDPE), 461-505 (SSQT…GSAK), and 520-545 (ALSLLPKQRENSGKPKKPGTPENNKE). The span at 466 to 486 (KSREEGKATQQREVESFHSET) shows a compositional bias: basic and acidic residues.

Belongs to the type I cytokine receptor family. Type 1 subfamily. Homodimer upon hormone binding. Interacts with SMARCA1. Interacts with GH1. Interacts with CSH. Interacts with NEK3 and VAV2 and this interaction is prolactin-dependent. As to expression, expressed in breast, placenta, kidney, liver and pancreas.

It localises to the membrane. The protein localises to the secreted. Its function is as follows. This is a receptor for the anterior pituitary hormone prolactin (PRL). Acts as a prosurvival factor for spermatozoa by inhibiting sperm capacitation through suppression of SRC kinase activation and stimulation of AKT. Isoform 4 is unable to transduce prolactin signaling. Isoform 6 is unable to transduce prolactin signaling. The chain is Prolactin receptor (PRLR) from Homo sapiens (Human).